The primary structure comprises 144 residues: 3-hydroxyacyl-[acyl-carrier-protein] dehydratase FabZ (144 aa).

His-51 is an active-site residue.

It belongs to the thioester dehydratase family. FabZ subfamily.

The protein resides in the cytoplasm. It catalyses the reaction a (3R)-hydroxyacyl-[ACP] = a (2E)-enoyl-[ACP] + H2O. In terms of biological role, involved in unsaturated fatty acids biosynthesis. Catalyzes the dehydration of short chain beta-hydroxyacyl-ACPs and long chain saturated and unsaturated beta-hydroxyacyl-ACPs. The polypeptide is 3-hydroxyacyl-[acyl-carrier-protein] dehydratase FabZ (Lactococcus lactis subsp. cremoris (strain MG1363)).